Consider the following 147-residue polypeptide: Calcium-regulated heat stable protein 1 (147 aa).

The segment covering 1–12 has biased composition (pro residues); that stretch reads MSSEPPPPPQPP. The disordered stretch occupies residues 1-49; it reads MSSEPPPPPQPPTHQTSIGLLDTPRARDRSPSPLRGNVVPSPLPTRRTR. Residue serine 2 is modified to N-acetylserine. A phosphoserine mark is found at serine 30, serine 32, and serine 41. Threonine 45 carries the phosphothreonine modification. 2 positions are modified to phosphoserine: serine 52 and serine 58. A CSD domain is found at 62–129; sequence VYKGVCKCFC…KLQAVEVVIT (68 aa). Phosphoserine occurs at positions 146 and 147.

As to quaternary structure, homodimer. Interacts with STYX. Can be phosphorylated by DYRK2 (in vitro). Dephosphorylated by calcineurin in a Ca(2+) dependent manner, and probably by PP2A or PP4 serine phosphatases in cAMP- and PKC-mediated pathways. In terms of tissue distribution, widely expressed.

The protein localises to the cytoplasm. It is found in the P-body. Its subcellular location is the cytoplasmic granule. Functionally, binds mRNA and regulates the stability of target mRNA. The chain is Calcium-regulated heat stable protein 1 (Carhsp1) from Rattus norvegicus (Rat).